We begin with the raw amino-acid sequence, 136 residues long: MMTAAKRLGLYSALRACSATVFRSNLHPKVTVATMFCSVGTIPDVAEVSFSDSGAALFMSSSLWKVVAGFVPSRFWFSHTCLVFGSNTILFASLNSFKRSSSAIIKKVSLDTPVYVGLEKKNKMQPLLPCFFRRAV.

Positions 1–19 (MMTAAKRLGLYSALRACSA) are cleaved as a signal peptide. Residues 75–97 (FWFSHTCLVFGSNTILFASLNSF) traverse the membrane as a helical segment.

It is found in the membrane. This is an uncharacterized protein from Saccharomyces cerevisiae (strain ATCC 204508 / S288c) (Baker's yeast).